Reading from the N-terminus, the 271-residue chain is p-hydroxybenzoate hydroxylase transcriptional activator (271 aa).

Positions 23 to 83 constitute an HTH iclR-type domain; it reads IAGLAKGLAL…TDEHYFWLTH (61 aa). A DNA-binding region (H-T-H motif) is located at residues 45-64; the sequence is VTQVAERTGISRTAARRYLK. In terms of domain architecture, IclR-ED spans 98–271; it reads LPKVAQSFLN…NTANELRNLV (174 aa).

Functionally, positive regulator of the pobA gene for p-hydroxybenzoate hydroxylase. This chain is p-hydroxybenzoate hydroxylase transcriptional activator (pobR), found in Acinetobacter baylyi (strain ATCC 33305 / BD413 / ADP1).